We begin with the raw amino-acid sequence, 729 residues long: Cullin-6 (729 aa).

The Cullin neddylation domain occupies 659–720; it reads DRKYEIKACI…EQLYIRRSEN (62 aa). K673 participates in a covalent cross-link: Glycyl lysine isopeptide (Lys-Gly) (interchain with G-Cter in NEDD8).

This sequence belongs to the cullin family. Probably interacts with skr-3. Post-translationally, neddylated; which enhances the ubiquitination activity of SCF-like complex.

Functionally, probable core component of cullin-based SCF-like E3 ubiquitin-protein ligase complexes which mediate the ubiquitination and subsequent proteasomal degradation of target proteins. The sequence is that of Cullin-6 (cul-6) from Caenorhabditis elegans.